The following is a 320-amino-acid chain: MAFPKKKLQGLVAATITPMTENGEINFPVIGQYVDYLVKEQGVKNIFVNGTTGEGLSLSISERRQVAEEWVRQGKNKLDQVVIHVGALNLKESQELAQHAAEIGADGIAVIAPFFFKSQNKDALISFLREVAAAAPALPFYYYHIPSLTGVKIRAEELLDGIQDKIPSFQGLKFSDTDLLDFGQCVDQNHQRQFALLFGVDEQLLSALVLGATGAVGSTYNYLGKKTNQMLEAFEQKDLASALSYQFRIQRFINYVIKLGFGVSQTKAIMTLVSGIPMGPPRLPLQKATQEFTANAEAKLKSLNFLSFPGLKDGNMEACS.

The aceneuramate site is built by Thr-51 and Thr-52. The Proton donor role is filled by Tyr-143. The active-site Schiff-base intermediate with substrate is Lys-173. Aceneuramate contacts are provided by Ser-175, Gly-199, Asp-201, Glu-202, and Ser-218.

Belongs to the DapA family. NanA subfamily. In terms of assembly, homotetramer.

It localises to the cytoplasm. The enzyme catalyses aceneuramate = aldehydo-N-acetyl-D-mannosamine + pyruvate. Its pathway is amino-sugar metabolism; N-acetylneuraminate degradation. Its function is as follows. Catalyzes the cleavage of N-acetylneuraminic acid (sialic acid) to form pyruvate and N-acetylmannosamine via a Schiff base intermediate. It prevents sialic acids from being recycled and returning to the cell surface. Involved in the N-glycolylneuraminic acid (Neu5Gc) degradation pathway. This chain is N-acetylneuraminate lyase, found in Rattus norvegicus (Rat).